The sequence spans 1733 residues: Probable nuclear antigen (1733 aa).

Disordered stretches follow at residues 1 to 41 (MNLF…THFT), 71 to 394 (PHPP…EQQV), 437 to 506 (AGAG…EGAQ), 520 to 548 (APAA…EGGA), 882 to 907 (LGGG…GAAL), 993 to 1141 (AGGP…EDAA), 1223 to 1242 (PERV…RGHA), 1348 to 1475 (GAGP…GRAG), 1585 to 1608 (SGGG…WGSG), and 1630 to 1665 (PRRR…RGGC). Residues 21–31 (DHHHQQHHHHP) are compositionally biased toward basic residues. Residues 77 to 97 (PQDHHRPTPARDHRDPRDHLP) show a composition bias toward basic and acidic residues. Over residues 113–131 (TTTTTIKDPQHPQDPLLLP) the composition is skewed to low complexity. Positions 135–147 (LQEEDPHLLRPTR) are enriched in basic and acidic residues. Residues 179–189 (GGGPPSPPPRP) show a composition bias toward pro residues. Residues 190–201 (STSSSSSHQGPP) show a composition bias toward low complexity. The span at 202-220 (STRPPPPQRPPPRWPPPSP) shows a compositional bias: pro residues. Polar residues predominate over residues 227–240 (RAGSENTAQTLFSH). Residues 272–299 (PPPSPPPRPPPPLPPPPPPPPPPQPPPA) are compositionally biased toward pro residues. The segment covering 316 to 326 (GGRRRGGKRRR) has biased composition (basic residues). The span at 336-354 (DAEEEEDGDGDEDEDEDRA) shows a compositional bias: acidic residues. A compositionally biased stretch (basic and acidic residues) spans 355-364 (EGEGREDGGE). 3 stretches are compositionally biased toward gly residues: residues 365-374 (GPRGAGGGAG), 454-466 (GAPG…GLEG), and 479-494 (GGDG…GLGV). The span at 495–506 (GLQQRRGAEGAQ) shows a compositional bias: low complexity. The segment covering 882 to 892 (LGGGGGGGQQR) has biased composition (gly residues). Residues 893-907 (GSGVRSGPESEGAAL) show a composition bias toward low complexity. 2 stretches are compositionally biased toward gly residues: residues 993 to 1004 (AGGPGAGEAGGG) and 1027 to 1043 (AGRG…LGEP). Composition is skewed to basic and acidic residues over residues 1078–1087 (GAGDEGDRVR) and 1100–1112 (RVAE…RHLL). Over residues 1116–1127 (GPEGGRGAGGRG) the composition is skewed to gly residues. A compositionally biased stretch (gly residues) spans 1385-1407 (GPGGLRGRGRGGRGGGGGGGGRG). Composition is skewed to basic residues over residues 1408–1420 (PRGR…RRWR) and 1444–1453 (RGGRGGRGGR). Positions 1454–1474 (GRGGGRAPRGGGGGPGGGGRA) are enriched in gly residues. The span at 1652–1665 (RGAGRAGGGGRGGC) shows a compositional bias: gly residues.

This is Probable nuclear antigen from Sus scrofa (Pig).